A 215-amino-acid chain; its full sequence is Ribose-5-phosphate isomerase A (215 aa).

Substrate-binding positions include 26–29, 79–82, and 92–95; these read TGST, DGAD, and KGGG. Residue glutamate 101 is the Proton acceptor of the active site. Position 119 (lysine 119) interacts with substrate.

The protein belongs to the ribose 5-phosphate isomerase family. As to quaternary structure, homodimer.

It carries out the reaction aldehydo-D-ribose 5-phosphate = D-ribulose 5-phosphate. It functions in the pathway carbohydrate degradation; pentose phosphate pathway; D-ribose 5-phosphate from D-ribulose 5-phosphate (non-oxidative stage): step 1/1. Functionally, catalyzes the reversible conversion of ribose-5-phosphate to ribulose 5-phosphate. In Xanthomonas campestris pv. campestris (strain 8004), this protein is Ribose-5-phosphate isomerase A.